A 162-amino-acid polypeptide reads, in one-letter code: Anaerobic nitrite reductase GLB1 (162 aa).

The Globin domain occupies 9–159 (VFSEEKEALV…LVAAIKQEMK (151 aa)). Residues 42–46 (EIAPS) carry the Homodimerization motif. Residues lysine 66, histidine 70, arginine 100, threonine 104, and histidine 105 each contribute to the heme b site. The Homodimerization motif lies at 112–124 (DGHFEVTRFALLE).

The protein belongs to the plant globin family. In terms of assembly, homodimer. It depends on heme b as a cofactor. As to expression, seeds and roots.

It is found in the cytoplasm. The protein localises to the nucleus. It catalyses the reaction Fe(III)-heme b-[protein] + nitric oxide + H2O = Fe(II)-heme b-[protein] + nitrite + 2 H(+). In terms of biological role, phytoglobin that reduces nitrite to nitric oxide (NO) under anoxic conditions (e.g. during flooding or in waterlogged soil). May not function as an oxygen storage or transport protein. Has an unusually high affinity for O(2) through an hexacoordinate heme iron because of a very low dissociation constant. This chain is Anaerobic nitrite reductase GLB1, found in Hordeum vulgare (Barley).